Here is a 398-residue protein sequence, read N- to C-terminus: uncharacterized protein (398 aa).

An N-terminal signal peptide occupies residues Met1 to Gly21. The residue at position 22 (Cys22) is an N-acetylcysteine. Residue Cys22 is the site of S-archaeol cysteine attachment.

Belongs to the BMP lipoprotein family.

The protein resides in the cell membrane. This is an uncharacterized protein from Pyrococcus furiosus (strain ATCC 43587 / DSM 3638 / JCM 8422 / Vc1).